Reading from the N-terminus, the 89-residue chain is Small ribosomal subunit protein uS15 (89 aa).

This sequence belongs to the universal ribosomal protein uS15 family. In terms of assembly, part of the 30S ribosomal subunit. Forms a bridge to the 50S subunit in the 70S ribosome, contacting the 23S rRNA.

Its function is as follows. One of the primary rRNA binding proteins, it binds directly to 16S rRNA where it helps nucleate assembly of the platform of the 30S subunit by binding and bridging several RNA helices of the 16S rRNA. In terms of biological role, forms an intersubunit bridge (bridge B4) with the 23S rRNA of the 50S subunit in the ribosome. The protein is Small ribosomal subunit protein uS15 of Streptococcus suis (strain 98HAH33).